Here is a 213-residue protein sequence, read N- to C-terminus: NADH-quinone oxidoreductase subunit C (213 aa).

This sequence belongs to the complex I 30 kDa subunit family. As to quaternary structure, NDH-1 is composed of 15 different subunits. Subunits NuoB, C, D, E, F, and G constitute the peripheral sector of the complex.

Its subcellular location is the cell membrane. It catalyses the reaction a quinone + NADH + 5 H(+)(in) = a quinol + NAD(+) + 4 H(+)(out). NDH-1 shuttles electrons from NADH, via FMN and iron-sulfur (Fe-S) centers, to quinones in the respiratory chain. The immediate electron acceptor for the enzyme in this species is believed to be a menaquinone. Couples the redox reaction to proton translocation (for every two electrons transferred, four hydrogen ions are translocated across the cytoplasmic membrane), and thus conserves the redox energy in a proton gradient. The sequence is that of NADH-quinone oxidoreductase subunit C from Deinococcus geothermalis (strain DSM 11300 / CIP 105573 / AG-3a).